Reading from the N-terminus, the 900-residue chain is Chaperone protein ClpB 2 (900 aa).

The 140-residue stretch at 15-154 folds into the Clp R domain; that stretch reads PDRFSDPAWE…ESLLRQPSVS (140 aa). Repeat regions lie at residues 18 to 81 and 91 to 154; these read FSDP…LADQ and IGED…PSVS. The interval 151–183 is disordered; the sequence is PSVSPAPAPPPVPTAASAPAPTPRSAPAPRVMA. A compositionally biased stretch (pro residues) spans 154–163; it reads SPAPAPPPVP. The segment at 191-376 is NBD1; the sequence is ELEREPSALE…RRFQQVLIRE (186 aa). 244–251 serves as a coordination point for ATP; that stretch reads GEPGVGKT. Residues 377 to 581 are linker; sequence PDLELSLEIL…IADLVARWTG (205 aa). The stretch at 427–557 forms a coiled coil; the sequence is IDLIDEAAAQ…LEASQAEAQS (131 aa). Positions 591 to 803 are NBD2; sequence ERRKLLALES…RIDEVIRFRP (213 aa). Position 641–648 (641–648) interacts with ATP; that stretch reads GPTGVGKT. The segment at 804–900 is C-terminal; that stretch reads LKVKDLVRIV…GASLEFEPLE (97 aa).

This sequence belongs to the ClpA/ClpB family. As to quaternary structure, homohexamer. The oligomerization is ATP-dependent.

The protein localises to the cytoplasm. In terms of biological role, part of a stress-induced multi-chaperone system, it is involved in the recovery of the cell from heat-induced damage, in cooperation with DnaK, DnaJ and GrpE. Acts before DnaK, in the processing of protein aggregates. Protein binding stimulates the ATPase activity; ATP hydrolysis unfolds the denatured protein aggregates, which probably helps expose new hydrophobic binding sites on the surface of ClpB-bound aggregates, contributing to the solubilization and refolding of denatured protein aggregates by DnaK. This Parasynechococcus marenigrum (strain WH8102) protein is Chaperone protein ClpB 2 (clpB2).